The sequence spans 918 residues: Signal transduction histidine-protein kinase BarA (918 aa).

The Cytoplasmic segment spans residues 1 to 10; the sequence is MTNYSLRARM. The helical transmembrane segment at 11–31 threads the bilayer; it reads MILILAPTVLIGLLLSIFFVV. At 32–175 the chain is on the periplasmic side; it reads HRYNDLQRQL…LKSVRLQQYK (144 aa). Residues 176–196 form a helical membrane-spanning segment; that stretch reads EIFISCVMMLFCIGIALIFGW. Over 197-918 the chain is Cytoplasmic; the sequence is RLMRDVTGPI…VAREASKILG (722 aa). Residues 200-252 enclose the HAMP domain; sequence RDVTGPIRNMVNTVDRIRRGQLDSRVEGFMLGELDMLKNGINSMAMSLAAYHE. Positions 299 to 520 constitute a Histidine kinase domain; that stretch reads NMSHELRTPL…TFWFHINLDL (222 aa). His-302 is modified (phosphohistidine; by autocatalysis). The 117-residue stretch at 669 to 785 folds into the Response regulatory domain; that stretch reads TVMAVDDNPA…RLHNLLLRYK (117 aa). Asp-718 carries the post-translational modification 4-aspartylphosphate. The HPt domain maps to 822 to 918; the sequence is KTDLARDMLQ…VAREASKILG (97 aa). Position 861 is a phosphohistidine (His-861).

In terms of processing, activation requires a sequential transfer of a phosphate group from a His in the primary transmitter domain, to an Asp in the receiver domain and to a His in the secondary transmitter domain.

It is found in the cell inner membrane. The catalysed reaction is ATP + protein L-histidine = ADP + protein N-phospho-L-histidine.. Functionally, member of the two-component regulatory system UvrY/BarA involved in the regulation of carbon metabolism via the CsrA/CsrB regulatory system. Phosphorylates UvrY, probably via a four-step phosphorelay. The polypeptide is Signal transduction histidine-protein kinase BarA (barA) (Shigella flexneri).